Consider the following 236-residue polypeptide: Phosphoribosylaminoimidazole-succinocarboxamide synthase (236 aa).

This sequence belongs to the SAICAR synthetase family.

It catalyses the reaction 5-amino-1-(5-phospho-D-ribosyl)imidazole-4-carboxylate + L-aspartate + ATP = (2S)-2-[5-amino-1-(5-phospho-beta-D-ribosyl)imidazole-4-carboxamido]succinate + ADP + phosphate + 2 H(+). Its pathway is purine metabolism; IMP biosynthesis via de novo pathway; 5-amino-1-(5-phospho-D-ribosyl)imidazole-4-carboxamide from 5-amino-1-(5-phospho-D-ribosyl)imidazole-4-carboxylate: step 1/2. This Chlorobium phaeobacteroides (strain BS1) protein is Phosphoribosylaminoimidazole-succinocarboxamide synthase.